A 985-amino-acid chain; its full sequence is Ras and Rab interactor 3 (985 aa).

A disordered region spans residues 1–24 (MIRHAGAPARGDPTGPVPVVGKGE). An SH2 domain is found at 63–158 (WLQLSLGQAE…LLPFTLRLPQ (96 aa)). Disordered regions lie at residues 183 to 202 (SLNP…DRAP), 251 to 293 (QPPL…QPCS), and 315 to 531 (PPVP…KGSL). A compositionally biased stretch (basic and acidic residues) spans 189–201 (ERGKPAEPPRDRA). Composition is skewed to pro residues over residues 278 to 288 (RRPPPPPPVLP) and 315 to 336 (PPVP…PNQP). Residues 424-442 (DTPRESTEQGQDTEVKASD) show a composition bias toward basic and acidic residues. The tract at residues 587-732 (FSSMFHAFLS…TTTDLGVTTS (146 aa)) is interaction with RAB5B. In terms of domain architecture, VPS9 spans 703–846 (HSKDGSLQQL…IKSYDKITVT (144 aa)). The Ras-associating domain occupies 877 to 963 (QDFICVSYLE…RDFHFVYRPL (87 aa)).

This sequence belongs to the RIN (Ras interaction/interference) family. In terms of assembly, interacts with CD2AP, RAB5B, RAB31 and BIN1. Widely expressed.

It is found in the cytoplasm. The protein resides in the cytoplasmic vesicle. Its subcellular location is the early endosome. Ras effector protein that functions as a guanine nucleotide exchange (GEF) for RAB5B and RAB31, by exchanging bound GDP for free GTP. Required for normal RAB31 function. In Homo sapiens (Human), this protein is Ras and Rab interactor 3 (RIN3).